The following is a 427-amino-acid chain: Glutamate-1-semialdehyde 2,1-aminomutase (427 aa).

Lys-267 carries the post-translational modification N6-(pyridoxal phosphate)lysine.

Belongs to the class-III pyridoxal-phosphate-dependent aminotransferase family. HemL subfamily. In terms of assembly, homodimer. The cofactor is pyridoxal 5'-phosphate.

The protein localises to the cytoplasm. The enzyme catalyses (S)-4-amino-5-oxopentanoate = 5-aminolevulinate. It functions in the pathway porphyrin-containing compound metabolism; protoporphyrin-IX biosynthesis; 5-aminolevulinate from L-glutamyl-tRNA(Glu): step 2/2. This Geobacter sulfurreducens (strain ATCC 51573 / DSM 12127 / PCA) protein is Glutamate-1-semialdehyde 2,1-aminomutase.